Reading from the N-terminus, the 1330-residue chain is MDLKILSLATDKTTDKLQEFLQTLKDDDLASLLQNQAVKGRAVGTLLRAVLKGSPCSEEDGALRRYKIYSCCIQLVESGDLQQDVASEIIGLLMLEVHHFPGPLLVDLASDFVGAVREDRLVNGKSLELLPIILTALATKKEVLACGKGDLNGEEYKRQLIDTLCSVRWPQRYMIQLTSVFKDVCLTPEEMNLVVAKVLTMFSKLNLQEIPPLVYQLLVLSSKGSRRSVLDGIIAFFRELDKQHREEQSSDELSELITAPADELYHVEGTVILHIVFAIKLDCELGRELLKHLKAGQQGDPSKCLCPFSIALLLSLTRIQRFEEQVFDLLKTSVVKSFKDLQLLQGSKFLQTLVPQRTCVSTMILEVVRNSVHSWDHVTQGLIEFGFILMDSYGPKKILDGKAVEIGTSLSKMTNQHACKLGANILLETFKIHEMIRQEILEQVLNRVVTRTSSPINHFLDLFSDIIMYAPLILQNCSKVTETFDYLTFLPLQTVQGLLKAVQPLLKISMSMRDSLILVLRKAMFASQLDARKSAVAGFLLLLKNFKVLGSLPSSQCTQSIGVTQVRVDVHSRYSAVANETFCLEIIDSLKRSLGQQADIRLMLYDGFYDVLRRNSQLASSIMQTLFSQLKQFYEPEPDLLPPLKLGACVLTQGSQIFLQEPLDHLLSCIQHCLAWYKSRVVPLQQGDEGEEEEEELYSELDDMLESITVRMIKSELEDFELDKSADFSQNTNVGIKNNICACLIMGVCEVLMEYNFSISNFSKSKFEEILSLFTCYKKFSDILSEKAGKGKAKMTSKVSDSLLSLKFVSDLLTALFRDSIQSHEESLSVLRSSGEFMHYAVNVTLQKIQQLIRTGHVSGPDGQNPDKIFQNLCDITRVLLWRYTSIPTSVEESGKKEKGKSISLLCLEGLQKTFSVVLQFYQPKVQQFLQALDVMGTEEEEAGVTVTQRASFQIRQFQRSLLNLLSSEEDDFNSKEALLLIAVLSTLSRLLEPTSPQFVQMLSWTSKICKEYSQEDASFCKSLMNLFFSLHVLYKSPVTLLRDLSQDIHGQLGDIDQDVEIEKTDHFAVVNLRTAAPTVCLLVLSQAEKVLEEVDWLIAKIKGSANQETLSDKVTPEDASSQAVPPTLLIEKAIVMQLGTLVTFFHELVQTALPSGSCVDTLLKGLSKIYSTLTAFVKYYLQVCQSSRGIPNTVEKLVKLSGSHLTPVCYSFISYVQNKSSDAPKCSEKEKAAVSTTMAKVLRETKPIPNLVFAIEQYEKFLIQLSKKSKVNLMQHMKLSTSRDFKIKGSVLDMVLREDEEDENEEGTASAHTQQDREPAKKRRKKCLS.

Lys-522 is covalently cross-linked (Glycyl lysine isopeptide (Lys-Gly) (interchain with G-Cter in ubiquitin)). Position 555 is a phosphoserine (Ser-555). Residue Thr-558 is modified to Phosphothreonine. Position 729 is a phosphoserine (Ser-729). Thr-948 carries the phosphothreonine modification. Ser-1122 is subject to Phosphoserine. The interval 1299–1330 (EDEEDENEEGTASAHTQQDREPAKKRRKKCLS) is disordered. Residues 1321-1330 (AKKRRKKCLS) show a composition bias toward basic residues.

Belongs to the Fanconi anemia group I protein family. In terms of assembly, homodimer. Part of a FANCI-FANCD2 heterodimeric complex that binds and scans dsDNA for DNA damage. Interacts with FANCL. Interacts with MTMR15/FAN1. Interacts with POLN. Interacts with UBL5; the interaction promotes FANCI homodimerization. Monoubiquitinated by FANCL on Lys-522 during S phase and upon genotoxic stress. Deubiquitinated by USP1 as cells enter G2/M, or once DNA repair is completed. Monoubiquitination requires the FANCA-FANCB-FANCC-FANCE-FANCF-FANCG-FANCM complex. Ubiquitination is required for binding to chromatin, DNA repair, and normal cell cycle progression. Monoubiquitination is stimulated by DNA-binding. Post-translationally, phosphorylated in response to DNA damage by ATM and/or ATR. Phosphorylation of FANCI promotes ubiquitination of FANCD2, which prevents DNA release from the FANCI-FANCD2 complex.

It localises to the nucleus. The protein localises to the cytoplasm. Functionally, plays an essential role in the repair of DNA double-strand breaks by homologous recombination and in the repair of interstrand DNA cross-links (ICLs) by promoting FANCD2 monoubiquitination by FANCL and participating in recruitment to DNA repair sites. The FANCI-FANCD2 complex binds and scans double-stranded DNA (dsDNA) for DNA damage; this complex stalls at DNA junctions between double-stranded DNA and single-stranded DNA. Participates in S phase and G2 phase checkpoint activation upon DNA damage. The polypeptide is Fanconi anemia group I protein homolog (Fanci) (Mus musculus (Mouse)).